The following is a 693-amino-acid chain: Sister chromatid cohesion 1 protein 3 (693 aa).

Disordered stretches follow at residues I167–V250, D262–D361, P460–N511, and T545–N573. Composition is skewed to basic and acidic residues over residues V178–D201 and T232–D243. Over residues S264 to D277 the composition is skewed to polar residues. Residues V278 to P295 show a composition bias toward basic and acidic residues. The segment covering R316 to G325 has biased composition (low complexity). Polar residues-rich tracts occupy residues P465–E483 and T545–V564.

Belongs to the rad21 family. In terms of assembly, component of the cohesin complex. In terms of tissue distribution, low expression in shoots, buds, siliques, leaves and roots. Found in, but not limited to, actively dividing cells: in procambium, protoderm and ground meristem in roots, and in shoot and floral meristems.

The protein resides in the nucleus. Its function is as follows. May be involved in sister chromatid cohesion during mitosis. In Arabidopsis thaliana (Mouse-ear cress), this protein is Sister chromatid cohesion 1 protein 3 (SYN3).